A 310-amino-acid polypeptide reads, in one-letter code: Malate dehydrogenase (310 aa).

NAD(+) is bound by residues 7–12 (GAGHVG) and aspartate 32. Residues arginine 81 and arginine 87 each contribute to the substrate site. NAD(+)-binding positions include asparagine 94 and 117–119 (VSN). Positions 119 and 150 each coordinate substrate. Residue histidine 174 is the Proton acceptor of the active site.

Belongs to the LDH/MDH superfamily. MDH type 3 family.

It carries out the reaction (S)-malate + NAD(+) = oxaloacetate + NADH + H(+). Functionally, catalyzes the reversible oxidation of malate to oxaloacetate. The protein is Malate dehydrogenase of Chlorobium phaeobacteroides (strain BS1).